A 382-amino-acid chain; its full sequence is Protein shisa-9A (382 aa).

The first 26 residues, methionine 1 to alanine 26, serve as a signal peptide directing secretion. Topologically, residues glutamine 27–lysine 132 are extracellular. Residue asparagine 39 is glycosylated (N-linked (GlcNAc...) asparagine). Residues threonine 133–phenylalanine 153 form a helical membrane-spanning segment. Topologically, residues threonine 154 to valine 382 are cytoplasmic.

It belongs to the shisa family. SHISA9 subfamily. In terms of assembly, component of some AMPA receptors (ionotropic glutamate receptors) complex.

It is found in the cell projection. The protein localises to the dendritic spine membrane. It localises to the synapse. Functionally, regulator of short-term neuronal synaptic plasticity in the dentate gyrus. Associates with AMPA receptors (ionotropic glutamate receptors) in synaptic spines and promotes AMPA receptor desensitization at excitatory synapses. In Danio rerio (Zebrafish), this protein is Protein shisa-9A (shisa9a).